The primary structure comprises 397 residues: Acetate kinase (397 aa).

Asn-7 contacts Mg(2+). Lys-14 contributes to the ATP binding site. Arg-91 is a substrate binding site. Asp-148 (proton donor/acceptor) is an active-site residue. ATP-binding positions include 208–212, 283–285, and 331–335; these read HLGNG, DFR, and GLGEN. Glu-383 is a binding site for Mg(2+).

This sequence belongs to the acetokinase family. As to quaternary structure, homodimer. The cofactor is Mg(2+). It depends on Mn(2+) as a cofactor.

Its subcellular location is the cytoplasm. The catalysed reaction is acetate + ATP = acetyl phosphate + ADP. Its pathway is metabolic intermediate biosynthesis; acetyl-CoA biosynthesis; acetyl-CoA from acetate: step 1/2. Its function is as follows. Catalyzes the formation of acetyl phosphate from acetate and ATP. Can also catalyze the reverse reaction. This is Acetate kinase from Heliobacterium modesticaldum (strain ATCC 51547 / Ice1).